The sequence spans 305 residues: Uridylate-specific endoribonuclease D (305 aa).

Residues M1–G17 form the signal peptide. In terms of domain architecture, EndoU spans S33–I305. Catalysis depends on residues H182, H197, and K240. The N-linked (GlcNAc...) asparagine glycan is linked to N288.

The protein belongs to the ENDOU family. Monomer. Mn(2+) is required as a cofactor.

It localises to the secreted. It catalyses the reaction ribonucleotidyl-uridine-RNA = a 5'-end dephospho-uridine-RNA + a 3'-end 2',3'-cyclophospho-ribonucleotide-RNA. Its function is as follows. Endoribonuclease that cleaves single-stranded RNAs at 5' of uridylates and releases a product with a 2',3'-cyclic phosphate at the 3'-end. The sequence is that of Uridylate-specific endoribonuclease D (endou-d) from Xenopus laevis (African clawed frog).